The following is a 661-amino-acid chain: UvrABC system protein B (661 aa).

The region spanning 25–414 is the Helicase ATP-binding domain; sequence AGLSSKKRSQ…GTVVELIIRP (390 aa). Residue 38–45 coordinates ATP; it reads GITGSGKT. Residues 91-114 carry the Beta-hairpin motif; sequence YYDYYQPEAYIARTDTFIEKDSSI. The region spanning 430 to 592 is the Helicase C-terminal domain; that stretch reads QVEDLISEIQ…IIPKTINRAI (163 aa). The region spanning 621–656 is the UVR domain; that stretch reads KTHIDKLKKEMLKAASNLEFEQAVKLRDQLKTLEEA.

Belongs to the UvrB family. Forms a heterotetramer with UvrA during the search for lesions. Interacts with UvrC in an incision complex.

The protein resides in the cytoplasm. In terms of biological role, the UvrABC repair system catalyzes the recognition and processing of DNA lesions. A damage recognition complex composed of 2 UvrA and 2 UvrB subunits scans DNA for abnormalities. Upon binding of the UvrA(2)B(2) complex to a putative damaged site, the DNA wraps around one UvrB monomer. DNA wrap is dependent on ATP binding by UvrB and probably causes local melting of the DNA helix, facilitating insertion of UvrB beta-hairpin between the DNA strands. Then UvrB probes one DNA strand for the presence of a lesion. If a lesion is found the UvrA subunits dissociate and the UvrB-DNA preincision complex is formed. This complex is subsequently bound by UvrC and the second UvrB is released. If no lesion is found, the DNA wraps around the other UvrB subunit that will check the other stand for damage. The chain is UvrABC system protein B from Rickettsia conorii (strain ATCC VR-613 / Malish 7).